We begin with the raw amino-acid sequence, 359 residues long: Dual-specificity RNA methyltransferase RlmN 1 (359 aa).

Glu-96 serves as the catalytic Proton acceptor. The region spanning 102-335 (FKGRATVCIS…STVRQRRGID (234 aa)) is the Radical SAM core domain. Cysteines 109 and 340 form a disulfide. Cys-116, Cys-120, and Cys-123 together coordinate [4Fe-4S] cluster. S-adenosyl-L-methionine-binding positions include 166–167 (GE), Ser-198, 221–223 (SLH), and Asn-297. The active-site S-methylcysteine intermediate is Cys-340.

The protein belongs to the radical SAM superfamily. RlmN family. It depends on [4Fe-4S] cluster as a cofactor.

It is found in the cytoplasm. The catalysed reaction is adenosine(2503) in 23S rRNA + 2 reduced [2Fe-2S]-[ferredoxin] + 2 S-adenosyl-L-methionine = 2-methyladenosine(2503) in 23S rRNA + 5'-deoxyadenosine + L-methionine + 2 oxidized [2Fe-2S]-[ferredoxin] + S-adenosyl-L-homocysteine. It catalyses the reaction adenosine(37) in tRNA + 2 reduced [2Fe-2S]-[ferredoxin] + 2 S-adenosyl-L-methionine = 2-methyladenosine(37) in tRNA + 5'-deoxyadenosine + L-methionine + 2 oxidized [2Fe-2S]-[ferredoxin] + S-adenosyl-L-homocysteine. Specifically methylates position 2 of adenine 2503 in 23S rRNA and position 2 of adenine 37 in tRNAs. m2A2503 modification seems to play a crucial role in the proofreading step occurring at the peptidyl transferase center and thus would serve to optimize ribosomal fidelity. The protein is Dual-specificity RNA methyltransferase RlmN 1 of Myxococcus xanthus (strain DK1622).